The chain runs to 72 residues: Translation initiation factor IF-1 (72 aa).

One can recognise an S1-like domain in the interval 1 to 72 (MAKDDVIEVE…TRGRIVWRGK (72 aa)).

Belongs to the IF-1 family. Component of the 30S ribosomal translation pre-initiation complex which assembles on the 30S ribosome in the order IF-2 and IF-3, IF-1 and N-formylmethionyl-tRNA(fMet); mRNA recruitment can occur at any time during PIC assembly.

It is found in the cytoplasm. Functionally, one of the essential components for the initiation of protein synthesis. Stabilizes the binding of IF-2 and IF-3 on the 30S subunit to which N-formylmethionyl-tRNA(fMet) subsequently binds. Helps modulate mRNA selection, yielding the 30S pre-initiation complex (PIC). Upon addition of the 50S ribosomal subunit IF-1, IF-2 and IF-3 are released leaving the mature 70S translation initiation complex. The protein is Translation initiation factor IF-1 of Caldanaerobacter subterraneus subsp. tengcongensis (strain DSM 15242 / JCM 11007 / NBRC 100824 / MB4) (Thermoanaerobacter tengcongensis).